A 741-amino-acid polypeptide reads, in one-letter code: Wall-associated receptor kinase 3 (741 aa).

The N-terminal stretch at 1-23 is a signal peptide; sequence MKFQEGVFLVVIFFLAYTQLVKG. Residues 24-342 lie on the Extracellular side of the membrane; it reads QHQPREDCKL…CTRPEYKRTR (319 aa). N37, N59, N78, N100, N103, N141, N192, N199, N232, N246, N261, and N266 each carry an N-linked (GlcNAc...) asparagine glycan. One can recognise an EGF-like 1 domain in the interval 245 to 292; that stretch reads GNQTCEQAGSTRICGKNSSCYNSTTRNGYICKCNEGYDGNPYRSEGCK. Intrachain disulfides connect C249–C264, C258–C275, C277–C291, C297–C310, C304–C319, and C321–C333. Residues 293–334 form the EGF-like 2; calcium-binding domain; it reads DIDECISDTHNCSDPKTCRNRDGGFDCKCPSGYDLNSSMSCT. N-linked (GlcNAc...) asparagine glycosylation is present at N303. Residue N328 is glycosylated (N-linked (GlcNAc...) asparagine). A helical transmembrane segment spans residues 343-363; the sequence is IFLVIIIGVLVLLLAAICIQH. At 364-741 the chain is on the cytoplasmic side; that stretch reads ATKQRKYTKL…VAILDIETGR (378 aa). Phosphothreonine is present on T404. The 284-residue stretch at 415–698 folds into the Protein kinase domain; sequence YDESRILGQG…RVEKTKHKWS (284 aa). ATP is bound by residues 421 to 429 and K443; that span reads LGQGGQGTV. Y488 is subject to Phosphotyrosine. The active-site Proton acceptor is the D540. Phosphothreonine is present on residues T574 and T579. A Phosphotyrosine modification is found at Y587.

This sequence belongs to the protein kinase superfamily. Ser/Thr protein kinase family. As to expression, predominantly expressed in green tissues such as stems and leaves.

The protein resides in the membrane. It carries out the reaction L-seryl-[protein] + ATP = O-phospho-L-seryl-[protein] + ADP + H(+). It catalyses the reaction L-threonyl-[protein] + ATP = O-phospho-L-threonyl-[protein] + ADP + H(+). Functionally, serine/threonine-protein kinase that may function as a signaling receptor of extracellular matrix component. Binding to pectin may have significance in the control of cell expansion, morphogenesis and development. The sequence is that of Wall-associated receptor kinase 3 (WAK3) from Arabidopsis thaliana (Mouse-ear cress).